The sequence spans 221 residues: Ras-related protein Rab-28 (221 aa).

N-acetylserine is present on S2. S8 carries the post-translational modification Phosphoserine. 9 residues coordinate GTP: G21, G24, K25, T26, S27, G38, K39, Y41, and T44. T26 is a Mg(2+) binding site. A switch I region spans residues 35–49; that stretch reads ETFGKRYKQTIGLDF. Residues T44 and D68 each contribute to the Mg(2+) site. The interval 68–85 is switch II; it reads DIGGQTIGGKMLDKYIYG. GTP contacts are provided by G71, N129, K130, D132, A160, and K161. C218 is modified (cysteine methyl ester). The S-farnesyl cysteine moiety is linked to residue C218. The propeptide at 219-221 is removed in mature form; sequence AVQ.

It belongs to the small GTPase superfamily. Rab family. Interacts (prenylated form) with PDE6D; the interaction promotes RAB28 delivery to the photoreceptor outer segments. Interacts with KCNJ13; the interaction may facilitate cone outer segments phagocytosis. Also participates in nuclear factor kappa-B p65/RELA nuclear transport in endothelial cells. Mg(2+) is required as a cofactor. Isoprenylated.

The protein localises to the cell membrane. Its subcellular location is the cytoplasm. It is found in the cytoskeleton. The protein resides in the cilium basal body. It localises to the nucleus. The catalysed reaction is GTP + H2O = GDP + phosphate + H(+). Regulated by guanine nucleotide exchange factors (GEFs) which promote the exchange of bound GDP for free GTP. Regulated by GTPase activating proteins (GAPs) which increase the GTP hydrolysis activity. Inhibited by GDP dissociation inhibitors (GDIs). The small GTPases Rab are key regulators of intracellular membrane trafficking, from the formation of transport vesicles to their fusion with membranes. Rabs cycle between an inactive GDP-bound form and an active GTP-bound form that is able to recruit to membranes different sets of downstream effectors directly responsible for vesicle formation, movement, tethering and fusion. RAB28 is required for shedding and phagocytosis of cone cell outer segments (OS) discs in the retina. Also participates in nuclear factor kappa-B p65/RELA nuclear transport in endothelial cells. The chain is Ras-related protein Rab-28 (RAB28) from Pongo abelii (Sumatran orangutan).